Reading from the N-terminus, the 87-residue chain is RNA-binding protein Hfq (87 aa).

Residues 9–68 form the Sm domain; sequence DPFLNALRRERIPVSIFLVNGIKLQGKIQSFDQFVILLENTVNQMVYKHAISTVVPARAV.

The protein belongs to the Hfq family. As to quaternary structure, homohexamer.

In terms of biological role, RNA chaperone that binds small regulatory RNA (sRNAs) and mRNAs to facilitate mRNA translational regulation in response to envelope stress, environmental stress and changes in metabolite concentrations. Also binds with high specificity to tRNAs. This chain is RNA-binding protein Hfq, found in Pseudoalteromonas translucida (strain TAC 125).